A 478-amino-acid polypeptide reads, in one-letter code: Trigger factor (478 aa).

Positions 162–243 constitute a PPIase FKBP-type domain; that stretch reads GDFVSIDLSA…VKSIKERELP (82 aa). Positions 424–478 are disordered; that stretch reads KDTDGNDIDTTEFFGPSGGAQAEAEGADEADADSDADSDTEADSDTEADEADEAK. Acidic residues predominate over residues 448–478; sequence EGADEADADSDADSDTEADSDTEADEADEAK.

It belongs to the FKBP-type PPIase family. Tig subfamily.

It localises to the cytoplasm. The enzyme catalyses [protein]-peptidylproline (omega=180) = [protein]-peptidylproline (omega=0). Involved in protein export. Acts as a chaperone by maintaining the newly synthesized protein in an open conformation. Functions as a peptidyl-prolyl cis-trans isomerase. The sequence is that of Trigger factor from Mycobacterium sp. (strain KMS).